Reading from the N-terminus, the 93-residue chain is Small integral membrane protein 41 (93 aa).

Residues 38–58 (VVLGVLSLLVLCGVLFLGGGL) form a helical membrane-spanning segment. Residues 71–80 (REQRASREPE) are compositionally biased toward basic and acidic residues. The interval 71 to 93 (REQRASREPEPGSASGEDGDDDS) is disordered.

It is found in the membrane. This is Small integral membrane protein 41 from Homo sapiens (Human).